The chain runs to 298 residues: Arginine/serine-rich protein 1 (298 aa).

Residues 1–135 (MSSAAMSKYV…SRSRSRGRSQ (135 aa)) form a disordered region. Ser17 carries the phosphoserine modification. Residues 23–36 (SPSTSGSGRSSRLS) are compositionally biased toward low complexity. Residues 60–105 (SRSHSRPRRSRRSRSRSRRRHQRKYRRYSRSYSRSRSRSRSHRYHR) show a composition bias toward basic residues. 2 positions are modified to phosphoserine: Ser118 and Ser120. Positions 124-135 (SRSRSRSRGRSQ) are enriched in basic residues. Arg145 carries the post-translational modification Omega-N-methylarginine. 2 disordered regions span residues 161-181 (RPRW…TPFR) and 218-298 (ASQG…WIPV). The segment covering 219-228 (SQGTAVSSSG) has biased composition (polar residues). Residues 230–246 (KVEHSEKQTEDATKNTS) are compositionally biased toward basic and acidic residues. Residues 247–271 (EKSSTQRNIAFSSNNSVAKPLQKTT) are compositionally biased toward polar residues. Residues 274–289 (AVEEKSSGSPKIDKKK) are compositionally biased toward basic and acidic residues. Ser282 carries the phosphoserine modification.

Belongs to the RSRP family. Post-translationally, phosphorylated. Phosphorylation at Ser-118 and Ser-120 mediates the interaction with spliceosome proteins.

Its subcellular location is the nucleus. Probably acts as a spliceosomal factor that contributes to spliceosome assembly and regulates the isoform switching of proteins such as PARP6. This Mus musculus (Mouse) protein is Arginine/serine-rich protein 1 (Rsrp1).